The primary structure comprises 151 residues: MATLERKLVEMLKAPVEALGHQLWGLEYIQAGKHSILRLYIDNEKGIFIEDCAEASRQVSAVLDVEDPITSEYTLEVSSPGVERLLFTAEQYKAYIGETVKVQLTMPVAGSRNLKGTVTGVDGQMLNLSVDGNELIVALDNIRKGNLIAKF.

This sequence belongs to the RimP family.

Its subcellular location is the cytoplasm. Its function is as follows. Required for maturation of 30S ribosomal subunits. This Shewanella halifaxensis (strain HAW-EB4) protein is Ribosome maturation factor RimP.